Consider the following 121-residue polypeptide: Ribosome-binding factor A (121 aa).

It belongs to the RbfA family. As to quaternary structure, monomer. Binds 30S ribosomal subunits, but not 50S ribosomal subunits or 70S ribosomes.

The protein localises to the cytoplasm. Functionally, one of several proteins that assist in the late maturation steps of the functional core of the 30S ribosomal subunit. Associates with free 30S ribosomal subunits (but not with 30S subunits that are part of 70S ribosomes or polysomes). Required for efficient processing of 16S rRNA. May interact with the 5'-terminal helix region of 16S rRNA. The polypeptide is Ribosome-binding factor A (Oenococcus oeni (strain ATCC BAA-331 / PSU-1)).